The primary structure comprises 605 residues: Alpha-1,3-galactosidase A (605 aa).

The signal sequence occupies residues 1–20; it reads MKKYLHILPACFLFYAAAHA. PbH1 repeat units follow at residues 256-278, 312-334, 421-443, 444-466, 477-507, and 517-547; these read SKNITLSRLQMHYMHGLGIVSQY, KGKVIIDSCYFAGAQDDPVNVHG, TPEVEIRNCYFTRTSTRGTLVTT, PRKVVIENNTYYKTGMSAILIEA, VKDVLIKGNTFIDCAYNGGPGHAVIAIHPSN, and HQNIRIEDNTFRTFDYPVLYAKSTAGLLFRN.

The protein belongs to the glycosyl hydrolase 110 family. A subfamily.

It catalyses the reaction Hydrolysis of terminal, non-reducing branched (1-&gt;3)-alpha-D-galactosidic residues, producing free D-galactose.. It carries out the reaction Hydrolysis of terminal, non-reducing alpha-D-galactose residues in alpha-D-galactosides, including galactose oligosaccharides, galactomannans and galactolipids.. Its function is as follows. Alpha-galactosidase that specifically removes branched alpha-1,3-linked galactose residues present in blood group B antigens. Has no activity toward linear alpha-1,3-linked galactose residues. This chain is Alpha-1,3-galactosidase A (glaA), found in Bacteroides fragilis (strain ATCC 25285 / DSM 2151 / CCUG 4856 / JCM 11019 / LMG 10263 / NCTC 9343 / Onslow / VPI 2553 / EN-2).